We begin with the raw amino-acid sequence, 321 residues long: tRNA U34 carboxymethyltransferase (321 aa).

Carboxy-S-adenosyl-L-methionine is bound by residues K90, W104, K109, G129, 151 to 153, 180 to 181, M195, Y199, and R314; these read DPT and IE.

It belongs to the class I-like SAM-binding methyltransferase superfamily. CmoB family. As to quaternary structure, homotetramer.

The enzyme catalyses carboxy-S-adenosyl-L-methionine + 5-hydroxyuridine(34) in tRNA = 5-carboxymethoxyuridine(34) in tRNA + S-adenosyl-L-homocysteine + H(+). Functionally, catalyzes carboxymethyl transfer from carboxy-S-adenosyl-L-methionine (Cx-SAM) to 5-hydroxyuridine (ho5U) to form 5-carboxymethoxyuridine (cmo5U) at position 34 in tRNAs. In Histophilus somni (strain 2336) (Haemophilus somnus), this protein is tRNA U34 carboxymethyltransferase.